The chain runs to 349 residues: Alcohol dehydrogenase 1 (349 aa).

Zn(2+) is bound by residues cysteine 46, histidine 69, cysteine 100, cysteine 103, cysteine 106, cysteine 114, and cysteine 156. Residues 180–186, aspartate 204, lysine 208, 270–272, and arginine 342 contribute to the NAD(+) site; these read GAGGGLG and VGL.

It belongs to the zinc-containing alcohol dehydrogenase family. Homotetramer. The cofactor is Zn(2+).

The catalysed reaction is a primary alcohol + NAD(+) = an aldehyde + NADH + H(+). It carries out the reaction a secondary alcohol + NAD(+) = a ketone + NADH + H(+). This Caenorhabditis elegans protein is Alcohol dehydrogenase 1.